Reading from the N-terminus, the 637-residue chain is Chaperone protein HtpG (637 aa).

The a; substrate-binding stretch occupies residues 1-330; it reads MATAPASHAF…TEDLPLNISR (330 aa). The interval 331-551 is b; it reads ETLQENVVVR…GGASTSSMDR (221 aa). A c region spans residues 552 to 637; that stretch reads LLRVLHKDES…GDWYKAVRGL (86 aa).

It belongs to the heat shock protein 90 family. Homodimer.

It is found in the cytoplasm. Its function is as follows. Molecular chaperone. Has ATPase activity. The sequence is that of Chaperone protein HtpG from Nitratidesulfovibrio vulgaris (strain ATCC 29579 / DSM 644 / CCUG 34227 / NCIMB 8303 / VKM B-1760 / Hildenborough) (Desulfovibrio vulgaris).